A 336-amino-acid chain; its full sequence is 4-hydroxy-3-methylbut-2-enyl diphosphate reductase (336 aa).

[4Fe-4S] cluster is bound at residue C37. (2E)-4-hydroxy-3-methylbut-2-enyl diphosphate-binding residues include H66 and H99. Residues H66 and H99 each contribute to the dimethylallyl diphosphate site. Isopentenyl diphosphate-binding residues include H66 and H99. C121 provides a ligand contact to [4Fe-4S] cluster. H149 contributes to the (2E)-4-hydroxy-3-methylbut-2-enyl diphosphate binding site. A dimethylallyl diphosphate-binding site is contributed by H149. Isopentenyl diphosphate is bound at residue H149. E151 (proton donor) is an active-site residue. T189 is a binding site for (2E)-4-hydroxy-3-methylbut-2-enyl diphosphate. C219 serves as a coordination point for [4Fe-4S] cluster. The (2E)-4-hydroxy-3-methylbut-2-enyl diphosphate site is built by S247, S248, N249, and S292. The dimethylallyl diphosphate site is built by S247, S248, N249, and S292. S247, S248, N249, and S292 together coordinate isopentenyl diphosphate.

The protein belongs to the IspH family. It depends on [4Fe-4S] cluster as a cofactor.

The enzyme catalyses isopentenyl diphosphate + 2 oxidized [2Fe-2S]-[ferredoxin] + H2O = (2E)-4-hydroxy-3-methylbut-2-enyl diphosphate + 2 reduced [2Fe-2S]-[ferredoxin] + 2 H(+). It catalyses the reaction dimethylallyl diphosphate + 2 oxidized [2Fe-2S]-[ferredoxin] + H2O = (2E)-4-hydroxy-3-methylbut-2-enyl diphosphate + 2 reduced [2Fe-2S]-[ferredoxin] + 2 H(+). Its pathway is isoprenoid biosynthesis; dimethylallyl diphosphate biosynthesis; dimethylallyl diphosphate from (2E)-4-hydroxy-3-methylbutenyl diphosphate: step 1/1. The protein operates within isoprenoid biosynthesis; isopentenyl diphosphate biosynthesis via DXP pathway; isopentenyl diphosphate from 1-deoxy-D-xylulose 5-phosphate: step 6/6. Catalyzes the conversion of 1-hydroxy-2-methyl-2-(E)-butenyl 4-diphosphate (HMBPP) into a mixture of isopentenyl diphosphate (IPP) and dimethylallyl diphosphate (DMAPP). Acts in the terminal step of the DOXP/MEP pathway for isoprenoid precursor biosynthesis. The chain is 4-hydroxy-3-methylbut-2-enyl diphosphate reductase from Rhodococcus jostii (strain RHA1).